Consider the following 374-residue polypeptide: Layilin (374 aa).

Residues 1-24 form the signal peptide; the sequence is MQPGPALQAVLLAVLLSEPRSSKG. Residues 25 to 221 are Extracellular-facing; it reads RLLSGQLVCR…TKETFKESRE (197 aa). Positions 37–177 constitute a C-type lectin domain; sequence TRRPCYKVIY…CNMKNNFICK (141 aa). 2 cysteine pairs are disulfide-bonded: cysteine 63–cysteine 176 and cysteine 142–cysteine 168. A glycan (N-linked (GlcNAc...) asparagine) is linked at asparagine 109. The interval 184-212 is disordered; that stretch reads STTPSIRPGGEATEPPTPVLPEETQKEDT. Residues 222-242 form a helical membrane-spanning segment; sequence AALNLAYILIPSIPLFLLLVV. Residues 243-374 lie on the Cytoplasmic side of the membrane; that stretch reads TSAACWVWIC…SGWVENEIYY (132 aa). Phosphoserine occurs at positions 279 and 292. The segment at 323-367 is interaction with NF2; sequence DYDNMAVNPSESGFVTLASMESGFVTNDIYEFSPDRMGRSKESGW. An interaction with TLN1 region spans residues 330–374; sequence NPSESGFVTLASMESGFVTNDIYEFSPDRMGRSKESGWVENEIYY. Repeat copies occupy residues 333-337, 343-347, 349-352, 364-368, and 370-373. A 3 X 5 AA repeats of E-S-G-X-V region spans residues 333 to 368; the sequence is ESGFVTLASMESGFVTNDIYEFSPDRMGRSKESGWV. A 2 X 4 AA repeats of N-X-I-Y region spans residues 349 to 373; it reads NDIYEFSPDRMGRSKESGWVENEIY.

In terms of assembly, interacts with NF2 and RDX. Interacts with TLN1. In terms of tissue distribution, widely expressed. Abundant in the ovary.

The protein resides in the membrane. In terms of biological role, receptor for hyaluronate. The chain is Layilin (LAYN) from Cricetulus griseus (Chinese hamster).